We begin with the raw amino-acid sequence, 265 residues long: Hydroxyethylthiazole kinase 2 (265 aa).

M39 provides a ligand contact to substrate. K115 and T168 together coordinate ATP. G195 is a substrate binding site.

Belongs to the Thz kinase family. Requires Mg(2+) as cofactor.

It catalyses the reaction 5-(2-hydroxyethyl)-4-methylthiazole + ATP = 4-methyl-5-(2-phosphooxyethyl)-thiazole + ADP + H(+). Its pathway is cofactor biosynthesis; thiamine diphosphate biosynthesis; 4-methyl-5-(2-phosphoethyl)-thiazole from 5-(2-hydroxyethyl)-4-methylthiazole: step 1/1. Catalyzes the phosphorylation of the hydroxyl group of 4-methyl-5-beta-hydroxyethylthiazole (THZ). The chain is Hydroxyethylthiazole kinase 2 from Clostridium botulinum (strain ATCC 19397 / Type A).